The chain runs to 205 residues: Holliday junction branch migration complex subunit RuvA (205 aa).

The domain I stretch occupies residues 1–64 (MIGRLRGVLI…EDAQLLYGFI (64 aa)). Residues 65–143 (TKKERSLFRL…SLMEASVGSE (79 aa)) form a domain II region. The tract at residues 144 to 156 (REFVLQSNYSPAP) is flexible linker. The tract at residues 157–205 (TVNSAEEDAISALLSLGYKPPQASKAVSAAYKEGMDSETLIKAALKSML) is domain III.

The protein belongs to the RuvA family. In terms of assembly, homotetramer. Forms an RuvA(8)-RuvB(12)-Holliday junction (HJ) complex. HJ DNA is sandwiched between 2 RuvA tetramers; dsDNA enters through RuvA and exits via RuvB. An RuvB hexamer assembles on each DNA strand where it exits the tetramer. Each RuvB hexamer is contacted by two RuvA subunits (via domain III) on 2 adjacent RuvB subunits; this complex drives branch migration. In the full resolvosome a probable DNA-RuvA(4)-RuvB(12)-RuvC(2) complex forms which resolves the HJ.

The protein localises to the cytoplasm. The RuvA-RuvB-RuvC complex processes Holliday junction (HJ) DNA during genetic recombination and DNA repair, while the RuvA-RuvB complex plays an important role in the rescue of blocked DNA replication forks via replication fork reversal (RFR). RuvA specifically binds to HJ cruciform DNA, conferring on it an open structure. The RuvB hexamer acts as an ATP-dependent pump, pulling dsDNA into and through the RuvAB complex. HJ branch migration allows RuvC to scan DNA until it finds its consensus sequence, where it cleaves and resolves the cruciform DNA. The protein is Holliday junction branch migration complex subunit RuvA of Shewanella sp. (strain MR-4).